Reading from the N-terminus, the 281-residue chain is Sulfur carrier protein FdhD (281 aa).

Catalysis depends on cysteine 117, which acts as the Cysteine persulfide intermediate.

Belongs to the FdhD family.

The protein localises to the cytoplasm. Its function is as follows. Required for formate dehydrogenase (FDH) activity. Acts as a sulfur carrier protein that transfers sulfur from IscS to the molybdenum cofactor prior to its insertion into FDH. In Xanthomonas euvesicatoria pv. vesicatoria (strain 85-10) (Xanthomonas campestris pv. vesicatoria), this protein is Sulfur carrier protein FdhD.